The chain runs to 171 residues: S-ribosylhomocysteine lyase (171 aa).

Positions 54, 58, and 128 each coordinate Fe cation.

Belongs to the LuxS family. In terms of assembly, homodimer. It depends on Fe cation as a cofactor.

The catalysed reaction is S-(5-deoxy-D-ribos-5-yl)-L-homocysteine = (S)-4,5-dihydroxypentane-2,3-dione + L-homocysteine. Its function is as follows. Involved in the synthesis of autoinducer 2 (AI-2) which is secreted by bacteria and is used to communicate both the cell density and the metabolic potential of the environment. The regulation of gene expression in response to changes in cell density is called quorum sensing. Catalyzes the transformation of S-ribosylhomocysteine (RHC) to homocysteine (HC) and 4,5-dihydroxy-2,3-pentadione (DPD). The protein is S-ribosylhomocysteine lyase of Escherichia fergusonii (strain ATCC 35469 / DSM 13698 / CCUG 18766 / IAM 14443 / JCM 21226 / LMG 7866 / NBRC 102419 / NCTC 12128 / CDC 0568-73).